The chain runs to 332 residues: Methionyl-tRNA formyltransferase (332 aa).

A (6S)-5,6,7,8-tetrahydrofolate-binding site is contributed by 114-117; it reads SLLP.

Belongs to the Fmt family.

It catalyses the reaction L-methionyl-tRNA(fMet) + (6R)-10-formyltetrahydrofolate = N-formyl-L-methionyl-tRNA(fMet) + (6S)-5,6,7,8-tetrahydrofolate + H(+). Functionally, attaches a formyl group to the free amino group of methionyl-tRNA(fMet). The formyl group appears to play a dual role in the initiator identity of N-formylmethionyl-tRNA by promoting its recognition by IF2 and preventing the misappropriation of this tRNA by the elongation apparatus. The polypeptide is Methionyl-tRNA formyltransferase (Corynebacterium aurimucosum (strain ATCC 700975 / DSM 44827 / CIP 107346 / CN-1) (Corynebacterium nigricans)).